The following is a 230-amino-acid chain: Ribonuclease 3 (230 aa).

One can recognise an RNase III domain in the interval Tyr-5–Asp-125. Glu-40 serves as a coordination point for Mg(2+). Residue Asp-44 is part of the active site. 2 residues coordinate Mg(2+): Asp-111 and Glu-114. Residue Glu-114 is part of the active site. Residues Asp-153 to Gln-223 enclose the DRBM domain.

Belongs to the ribonuclease III family. Homodimer. The cofactor is Mg(2+).

The protein resides in the cytoplasm. The catalysed reaction is Endonucleolytic cleavage to 5'-phosphomonoester.. Functionally, digests double-stranded RNA. Involved in the processing of primary rRNA transcript to yield the immediate precursors to the large and small rRNAs (23S and 16S). Also processes some mRNAs, and tRNAs when they are encoded in the rRNA operon. CRISPR (clustered regularly interspaced short palindromic repeat) is an adaptive immune system that provides protection against mobile genetic elements (viruses, transposable elements and conjugative plasmids). CRISPR clusters contain spacers, sequences complementary to antecedent mobile elements, and target invading nucleic acids. CRISPR clusters are transcribed and processed into CRISPR RNA (crRNA). In this organism endogenous ribonuclease 3 and Cas9 are required for correct coprocessing of pre-crRNA and the trans-encoded small RNA (tracrRNA). Cas9, crRNA and tracrRNA are required for cleavage of invading DNA. Complements pre-crRNA and tracrRNA coprocessing defects in an rnc deletion in S.pyogenes strain 370. This is Ribonuclease 3 from Francisella tularensis subsp. novicida (strain U112).